A 253-amino-acid chain; its full sequence is 5-oxoprolinase subunit A (253 aa).

The protein belongs to the LamB/PxpA family. As to quaternary structure, forms a complex composed of PxpA, PxpB and PxpC.

The enzyme catalyses 5-oxo-L-proline + ATP + 2 H2O = L-glutamate + ADP + phosphate + H(+). Functionally, catalyzes the cleavage of 5-oxoproline to form L-glutamate coupled to the hydrolysis of ATP to ADP and inorganic phosphate. The polypeptide is 5-oxoprolinase subunit A (Ruegeria pomeroyi (strain ATCC 700808 / DSM 15171 / DSS-3) (Silicibacter pomeroyi)).